Reading from the N-terminus, the 387-residue chain is Chaperone protein DnaJ (387 aa).

Positions 6 to 70 constitute a J domain; sequence DYYETLGVSR…QKRAAYDQYG (65 aa). Residues 143-225 form a CR-type zinc finger; that stretch reads GKDTKISYDR…CHGTGHEQER (83 aa). 8 residues coordinate Zn(2+): C156, C159, C173, C176, C199, C202, C213, and C216. CXXCXGXG motif repeat units lie at residues 156–163, 173–180, 199–206, and 213–220; these read CHTCNGSG, CHKCHGSG, CDVCGGTG, and CPTCHGTG.

Belongs to the DnaJ family. In terms of assembly, homodimer. Zn(2+) serves as cofactor.

It localises to the cytoplasm. Functionally, participates actively in the response to hyperosmotic and heat shock by preventing the aggregation of stress-denatured proteins and by disaggregating proteins, also in an autonomous, DnaK-independent fashion. Unfolded proteins bind initially to DnaJ; upon interaction with the DnaJ-bound protein, DnaK hydrolyzes its bound ATP, resulting in the formation of a stable complex. GrpE releases ADP from DnaK; ATP binding to DnaK triggers the release of the substrate protein, thus completing the reaction cycle. Several rounds of ATP-dependent interactions between DnaJ, DnaK and GrpE are required for fully efficient folding. Also involved, together with DnaK and GrpE, in the DNA replication of plasmids through activation of initiation proteins. The protein is Chaperone protein DnaJ of Lacticaseibacillus paracasei (strain ATCC 334 / BCRC 17002 / CCUG 31169 / CIP 107868 / KCTC 3260 / NRRL B-441) (Lactobacillus paracasei).